A 1025-amino-acid chain; its full sequence is Probable outer membrane protein PmpF (1025 aa).

The signal sequence occupies residues 1–20 (MTRRILPLSLVFIPLSCISA). Positions 654–681 (NSTETQTANNSIQEQKNTSETFDSNSTT) are disordered. Positions 659–681 (QTANNSIQEQKNTSETFDSNSTT) are enriched in polar residues. Residues 748-1025 (LLPDDSWFAL…YMNAGGALVF (278 aa)) enclose the Autotransporter domain.

This sequence belongs to the PMP outer membrane protein family.

The protein resides in the secreted. The protein localises to the cell wall. Its subcellular location is the cell outer membrane. The sequence is that of Probable outer membrane protein PmpF (pmpF) from Chlamydia muridarum (strain MoPn / Nigg).